A 207-amino-acid polypeptide reads, in one-letter code: Proteasome subunit beta 1 (207 aa).

The propeptide at Met1 to Gly9 is removed in mature form; by autocatalysis. Residue Thr10 is the Nucleophile of the active site.

It belongs to the peptidase T1B family. In terms of assembly, the 20S proteasome core is composed of 14 alpha and 14 beta subunits that assemble into four stacked heptameric rings, resulting in a barrel-shaped structure. The two inner rings, each composed of seven catalytic beta subunits, are sandwiched by two outer rings, each composed of seven alpha subunits. The catalytic chamber with the active sites is on the inside of the barrel. Has a gated structure, the ends of the cylinder being occluded by the N-termini of the alpha-subunits. Is capped at one or both ends by the proteasome regulatory ATPase, PAN.

Its subcellular location is the cytoplasm. The catalysed reaction is Cleavage of peptide bonds with very broad specificity.. With respect to regulation, the formation of the proteasomal ATPase PAN-20S proteasome complex, via the docking of the C-termini of PAN into the intersubunit pockets in the alpha-rings, triggers opening of the gate for substrate entry. Interconversion between the open-gate and close-gate conformations leads to a dynamic regulation of the 20S proteasome proteolysis activity. Component of the proteasome core, a large protease complex with broad specificity involved in protein degradation. The chain is Proteasome subunit beta 1 from Thermococcus sibiricus (strain DSM 12597 / MM 739).